Here is a 123-residue protein sequence, read N- to C-terminus: Large ribosomal subunit protein bL21 (123 aa).

The protein belongs to the bacterial ribosomal protein bL21 family. As to quaternary structure, part of the 50S ribosomal subunit. Contacts protein L20.

Functionally, this protein binds to 23S rRNA in the presence of protein L20. In Rhizobium meliloti (strain 1021) (Ensifer meliloti), this protein is Large ribosomal subunit protein bL21.